The chain runs to 327 residues: UDP-N-acetylenolpyruvoylglucosamine reductase (327 aa).

The region spanning 42–223 (RTGGLAELFY…RAAMDEVALH (182 aa)) is the FAD-binding PCMH-type domain. Arg188 is an active-site residue. Ser237 acts as the Proton donor in catalysis. The active site involves Glu307.

It belongs to the MurB family. The cofactor is FAD.

It localises to the cytoplasm. The catalysed reaction is UDP-N-acetyl-alpha-D-muramate + NADP(+) = UDP-N-acetyl-3-O-(1-carboxyvinyl)-alpha-D-glucosamine + NADPH + H(+). It functions in the pathway cell wall biogenesis; peptidoglycan biosynthesis. Its function is as follows. Cell wall formation. This chain is UDP-N-acetylenolpyruvoylglucosamine reductase, found in Bartonella tribocorum (strain CIP 105476 / IBS 506).